The primary structure comprises 454 residues: Bifunctional protein GlmU (454 aa).

Positions 1 to 226 (MALNVVILAA…AIEVEGANNR (226 aa)) are pyrophosphorylase. Residues 8–11 (LAAG), Lys-22, Gln-73, 78–79 (GT), 100–102 (YGD), Gly-137, Glu-151, Asn-166, and Asn-224 contribute to the UDP-N-acetyl-alpha-D-glucosamine site. Asp-102 is a Mg(2+) binding site. A Mg(2+)-binding site is contributed by Asn-224. The interval 227 to 247 (VQLAQLERAYQAREAEKLMLA) is linker. Positions 248–454 (GANLRDPHRI…DWKRPVKIKK (207 aa)) are N-acetyltransferase. Residues Arg-330 and Lys-348 each coordinate UDP-N-acetyl-alpha-D-glucosamine. Catalysis depends on His-360, which acts as the Proton acceptor. Residues Tyr-363 and Asn-374 each contribute to the UDP-N-acetyl-alpha-D-glucosamine site. Residues Ala-377, 383-384 (NY), Ser-402, Ala-420, and Arg-437 contribute to the acetyl-CoA site.

This sequence in the N-terminal section; belongs to the N-acetylglucosamine-1-phosphate uridyltransferase family. The protein in the C-terminal section; belongs to the transferase hexapeptide repeat family. Homotrimer. It depends on Mg(2+) as a cofactor.

Its subcellular location is the cytoplasm. It carries out the reaction alpha-D-glucosamine 1-phosphate + acetyl-CoA = N-acetyl-alpha-D-glucosamine 1-phosphate + CoA + H(+). The catalysed reaction is N-acetyl-alpha-D-glucosamine 1-phosphate + UTP + H(+) = UDP-N-acetyl-alpha-D-glucosamine + diphosphate. The protein operates within nucleotide-sugar biosynthesis; UDP-N-acetyl-alpha-D-glucosamine biosynthesis; N-acetyl-alpha-D-glucosamine 1-phosphate from alpha-D-glucosamine 6-phosphate (route II): step 2/2. It functions in the pathway nucleotide-sugar biosynthesis; UDP-N-acetyl-alpha-D-glucosamine biosynthesis; UDP-N-acetyl-alpha-D-glucosamine from N-acetyl-alpha-D-glucosamine 1-phosphate: step 1/1. Its pathway is bacterial outer membrane biogenesis; LPS lipid A biosynthesis. Functionally, catalyzes the last two sequential reactions in the de novo biosynthetic pathway for UDP-N-acetylglucosamine (UDP-GlcNAc). The C-terminal domain catalyzes the transfer of acetyl group from acetyl coenzyme A to glucosamine-1-phosphate (GlcN-1-P) to produce N-acetylglucosamine-1-phosphate (GlcNAc-1-P), which is converted into UDP-GlcNAc by the transfer of uridine 5-monophosphate (from uridine 5-triphosphate), a reaction catalyzed by the N-terminal domain. In Shewanella putrefaciens (strain CN-32 / ATCC BAA-453), this protein is Bifunctional protein GlmU.